Consider the following 188-residue polypeptide: dCTP deaminase (188 aa).

DCTP-binding positions include 111–116, 135–137, Gln-156, Tyr-170, and Gln-180; these read KSTYAR and TLE. Residue Glu-137 is the Proton donor/acceptor of the active site.

It belongs to the dCTP deaminase family. Homotrimer.

It carries out the reaction dCTP + H2O + H(+) = dUTP + NH4(+). It participates in pyrimidine metabolism; dUMP biosynthesis; dUMP from dCTP (dUTP route): step 1/2. Catalyzes the deamination of dCTP to dUTP. The chain is dCTP deaminase from Acidithiobacillus ferrooxidans (strain ATCC 23270 / DSM 14882 / CIP 104768 / NCIMB 8455) (Ferrobacillus ferrooxidans (strain ATCC 23270)).